The sequence spans 137 residues: Transcription antitermination protein NusB (137 aa).

The protein belongs to the NusB family.

In terms of biological role, involved in transcription antitermination. Required for transcription of ribosomal RNA (rRNA) genes. Binds specifically to the boxA antiterminator sequence of the ribosomal RNA (rrn) operons. The sequence is that of Transcription antitermination protein NusB from Aeromonas salmonicida (strain A449).